We begin with the raw amino-acid sequence, 142 residues long: Large ribosomal subunit protein uL13 (142 aa).

The protein belongs to the universal ribosomal protein uL13 family. In terms of assembly, part of the 50S ribosomal subunit.

Functionally, this protein is one of the early assembly proteins of the 50S ribosomal subunit, although it is not seen to bind rRNA by itself. It is important during the early stages of 50S assembly. In Maridesulfovibrio salexigens (strain ATCC 14822 / DSM 2638 / NCIMB 8403 / VKM B-1763) (Desulfovibrio salexigens), this protein is Large ribosomal subunit protein uL13.